We begin with the raw amino-acid sequence, 65 residues long: Putative beta-neurotoxin RjAa8 (65 aa).

In terms of domain architecture, LCN-type CS-alpha/beta spans 1-64; it reads KEGYPMGRDG…VWDSSTNKCG (64 aa). Cystine bridges form between Cys-11–Cys-63, Cys-15–Cys-37, Cys-22–Cys-44, and Cys-26–Cys-46.

The protein belongs to the long (4 C-C) scorpion toxin superfamily. Sodium channel inhibitor family. Beta subfamily. In terms of tissue distribution, expressed by the venom gland.

It is found in the secreted. In terms of biological role, beta toxins bind voltage-independently at site-4 of sodium channels (Nav) and shift the voltage of activation toward more negative potentials thereby affecting sodium channel activation and promoting spontaneous and repetitive firing. This Rhopalurus junceus (Caribbean blue scorpion) protein is Putative beta-neurotoxin RjAa8.